The primary structure comprises 293 residues: uncharacterized protein (293 aa).

Catalysis depends on charge relay system residues threonine 43 and tyrosine 105. Catalysis depends on tyrosine 131, which acts as the Proton donor. Lysine 159 (schiff-base intermediate with substrate) is an active-site residue.

This sequence belongs to the DapA family. As to quaternary structure, homotetramer.

It is found in the cytoplasm. This is an uncharacterized protein from Thermococcus onnurineus (strain NA1).